We begin with the raw amino-acid sequence, 88 residues long: EKC/KEOPS complex subunit SPAC4H3.13 (88 aa).

This sequence belongs to the CTAG/PCC1 family. As to quaternary structure, component of the EKC/KEOPS complex composed of at least of SPAP27G11.07c/BUD32, cgi121, gon7, pgp2 and SPAC4H3.13/PCC1; the whole complex dimerizes.

It localises to the cytoplasm. It is found in the nucleus. The protein localises to the chromosome. The protein resides in the telomere. In terms of biological role, component of the EKC/KEOPS complex that is required for the formation of a threonylcarbamoyl group on adenosine at position 37 (t(6)A37) in tRNAs that read codons beginning with adenine. The complex is probably involved in the transfer of the threonylcarbamoyl moiety of threonylcarbamoyl-AMP (TC-AMP) to the N6 group of A37. SPAC4H3.13/PCC1 functions as a dimerization module for the complex. The EKC/KEOPS complex also promotes both telomere uncapping and telomere elongation. The complex is required for efficient recruitment of transcriptional coactivators. This chain is EKC/KEOPS complex subunit SPAC4H3.13, found in Schizosaccharomyces pombe (strain 972 / ATCC 24843) (Fission yeast).